Consider the following 325-residue polypeptide: Tetraacyldisaccharide 4'-kinase (325 aa).

Residue 55 to 62 (TAGGNGKT) participates in ATP binding.

This sequence belongs to the LpxK family.

It carries out the reaction a lipid A disaccharide + ATP = a lipid IVA + ADP + H(+). The protein operates within glycolipid biosynthesis; lipid IV(A) biosynthesis; lipid IV(A) from (3R)-3-hydroxytetradecanoyl-[acyl-carrier-protein] and UDP-N-acetyl-alpha-D-glucosamine: step 6/6. Its function is as follows. Transfers the gamma-phosphate of ATP to the 4'-position of a tetraacyldisaccharide 1-phosphate intermediate (termed DS-1-P) to form tetraacyldisaccharide 1,4'-bis-phosphate (lipid IVA). The protein is Tetraacyldisaccharide 4'-kinase of Salmonella paratyphi B (strain ATCC BAA-1250 / SPB7).